Reading from the N-terminus, the 373-residue chain is Flagellar P-ring protein (373 aa).

Positions 1-28 (MPRVSTHLVKLAAAALCALLLSAVAASA) are cleaved as a signal peptide.

This sequence belongs to the FlgI family. In terms of assembly, the basal body constitutes a major portion of the flagellar organelle and consists of four rings (L,P,S, and M) mounted on a central rod.

It localises to the periplasm. It is found in the bacterial flagellum basal body. Assembles around the rod to form the L-ring and probably protects the motor/basal body from shearing forces during rotation. This is Flagellar P-ring protein from Rhodopseudomonas palustris (strain ATCC BAA-98 / CGA009).